The following is a 138-amino-acid chain: Fluoride-specific ion channel FluC (138 aa).

4 helical membrane-spanning segments follow: residues F34 to A54, M60 to M80, F88 to V108, and L112 to M132. Na(+)-binding residues include G95 and T98.

This sequence belongs to the fluoride channel Fluc/FEX (TC 1.A.43) family.

The protein localises to the cell membrane. It carries out the reaction fluoride(in) = fluoride(out). Its activity is regulated as follows. Na(+) is not transported, but it plays an essential structural role and its presence is essential for fluoride channel function. Its function is as follows. Fluoride-specific ion channel. Important for reducing fluoride concentration in the cell, thus reducing its toxicity. This is Fluoride-specific ion channel FluC from Corynebacterium efficiens (strain DSM 44549 / YS-314 / AJ 12310 / JCM 11189 / NBRC 100395).